Reading from the N-terminus, the 400-residue chain is GTPase Obg (400 aa).

In terms of domain architecture, Obg spans 1-159 (MKFVDEVQIR…RTLKLELLLL (159 aa)). The region spanning 160–333 (ADVGMLGLPN…VCYDILDLLD (174 aa)) is the OBG-type G domain. GTP is bound by residues 166 to 173 (GLPNAGKS), 191 to 195 (FTTLV), 213 to 216 (DIPG), 283 to 286 (NKMD), and 314 to 316 (SAI). Mg(2+) is bound by residues serine 173 and threonine 193.

It belongs to the TRAFAC class OBG-HflX-like GTPase superfamily. OBG GTPase family. Monomer. Mg(2+) is required as a cofactor.

The protein localises to the cytoplasm. In terms of biological role, an essential GTPase which binds GTP, GDP and possibly (p)ppGpp with moderate affinity, with high nucleotide exchange rates and a fairly low GTP hydrolysis rate. Plays a role in control of the cell cycle, stress response, ribosome biogenesis and in those bacteria that undergo differentiation, in morphogenesis control. This is GTPase Obg from Aeromonas salmonicida (strain A449).